The sequence spans 233 residues: Somatolactin (233 aa).

Positions 1–24 (MNMMQVMQSVVWAVLLWPCLVSLG) are cleaved as a signal peptide. Cystine bridges form between cysteine 29–cysteine 39, cysteine 89–cysteine 205, and cysteine 222–cysteine 230.

This sequence belongs to the somatotropin/prolactin family. Pituitary gland.

It is found in the secreted. May be associated with ion regulation and reproduction. The chain is Somatolactin from Oncorhynchus keta (Chum salmon).